Here is a 382-residue protein sequence, read N- to C-terminus: Succinate--CoA ligase [ADP-forming] subunit beta (382 aa).

The ATP-grasp domain maps to 9 to 237 (RDLLARYGIP…PSAEPEAERR (229 aa)). ATP-binding positions include lysine 45, 52 to 54 (GRG), isoleucine 94, and glutamate 99. Positions 192 and 206 each coordinate Mg(2+). Substrate-binding positions include asparagine 257 and 314–316 (GIT).

Belongs to the succinate/malate CoA ligase beta subunit family. In terms of assembly, heterotetramer of two alpha and two beta subunits. Mg(2+) serves as cofactor.

It catalyses the reaction succinate + ATP + CoA = succinyl-CoA + ADP + phosphate. It carries out the reaction GTP + succinate + CoA = succinyl-CoA + GDP + phosphate. It functions in the pathway carbohydrate metabolism; tricarboxylic acid cycle; succinate from succinyl-CoA (ligase route): step 1/1. Succinyl-CoA synthetase functions in the citric acid cycle (TCA), coupling the hydrolysis of succinyl-CoA to the synthesis of either ATP or GTP and thus represents the only step of substrate-level phosphorylation in the TCA. The beta subunit provides nucleotide specificity of the enzyme and binds the substrate succinate, while the binding sites for coenzyme A and phosphate are found in the alpha subunit. In Chloroflexus aggregans (strain MD-66 / DSM 9485), this protein is Succinate--CoA ligase [ADP-forming] subunit beta.